The following is a 188-amino-acid chain: ATP synthase subunit delta (188 aa).

Belongs to the ATPase delta chain family. In terms of assembly, F-type ATPases have 2 components, F(1) - the catalytic core - and F(0) - the membrane proton channel. F(1) has five subunits: alpha(3), beta(3), gamma(1), delta(1), epsilon(1). F(0) has three main subunits: a(1), b(2) and c(10-14). The alpha and beta chains form an alternating ring which encloses part of the gamma chain. F(1) is attached to F(0) by a central stalk formed by the gamma and epsilon chains, while a peripheral stalk is formed by the delta and b chains.

Its subcellular location is the cell inner membrane. In terms of biological role, f(1)F(0) ATP synthase produces ATP from ADP in the presence of a proton or sodium gradient. F-type ATPases consist of two structural domains, F(1) containing the extramembraneous catalytic core and F(0) containing the membrane proton channel, linked together by a central stalk and a peripheral stalk. During catalysis, ATP synthesis in the catalytic domain of F(1) is coupled via a rotary mechanism of the central stalk subunits to proton translocation. Functionally, this protein is part of the stalk that links CF(0) to CF(1). It either transmits conformational changes from CF(0) to CF(1) or is implicated in proton conduction. This is ATP synthase subunit delta from Paracoccus denitrificans (strain Pd 1222).